We begin with the raw amino-acid sequence, 267 residues long: Ribosomal RNA small subunit methyltransferase J (267 aa).

S-adenosyl-L-methionine-binding positions include 133–134 (ER) and aspartate 187.

This sequence belongs to the methyltransferase superfamily. RsmJ family.

Its subcellular location is the cytoplasm. It catalyses the reaction guanosine(1516) in 16S rRNA + S-adenosyl-L-methionine = N(2)-methylguanosine(1516) in 16S rRNA + S-adenosyl-L-homocysteine + H(+). In terms of biological role, specifically methylates the guanosine in position 1516 of 16S rRNA. The protein is Ribosomal RNA small subunit methyltransferase J of Halorhodospira halophila (strain DSM 244 / SL1) (Ectothiorhodospira halophila (strain DSM 244 / SL1)).